An 866-amino-acid chain; its full sequence is Interleukin-17 receptor A (866 aa).

Residues 1–32 (MGAARSPPSAVPGPLLGLLLLLLGVLAPGGAS) form the signal peptide. The Extracellular portion of the chain corresponds to 33–320 (LRLLDHRALV…EPIPDYMPLW (288 aa)). Cys-43 and Cys-50 are disulfide-bonded. Residues Asn-49, Asn-54, and Asn-67 are each glycosylated (N-linked (GlcNAc...) asparagine). 2 cysteine pairs are disulfide-bonded: Cys-57/Cys-126 and Cys-185/Cys-196. N-linked (GlcNAc...) asparagine glycans are attached at residues Asn-206, Asn-225, Asn-242, and Asn-265. 3 disulfide bridges follow: Cys-245–Cys-276, Cys-277–Cys-303, and Cys-290–Cys-294. A helical transmembrane segment spans residues 321-341 (VYWFITGISILLVGSVILLIV). The Cytoplasmic segment spans residues 342-866 (CMTWRLAGPG…MGSESEGPSA (525 aa)). The SEFIR domain maps to 377–534 (PRKVWIIYSA…LMDRFEEVYF (158 aa)). Phosphoserine is present on residues Ser-708 and Ser-736. Disordered stretches follow at residues 717–736 (LFLP…PMAS) and 773–840 (MVLT…RSLQ). Residues 788-801 (QSVQSDQGYISRSS) show a composition bias toward polar residues. Residues 809 to 819 (TEMEEEEEEEQ) show a composition bias toward acidic residues.

In terms of assembly, forms heterodimers with IL17RC; the heterodimer binds IL17A and IL17F homodimers as well as the heterodimer formed by IL17A and IL17F. Forms complexes with 2:1 binding stoichiometry: two receptor chains for one interleukin molecule. IL17A homodimer preferentially drives the formation of IL17RA-IL17RC heterodimeric receptor complex, whereas IL17F homodimer forms predominantly complexes with IL17RC homodimer. IL17A homodimer adopts an asymmetrical ternary structure with one IL17RA molecule, allowing for high affinity interactions of one IL17A monomer with one IL17RA molecule (via D1 and D2 domains), while disfavoring binding of a second IL17RA molecule on the other IL17A monomer. IL17A-IL17F forms complexes with IL17RA-IL17RC, but with lower affinity when compared to IL17A homodimer. IL17RA chain cannot distinguish between IL17A and IL17F molecules, potentially enabling the formation of topologically distinct complexes. Interacts with TRAF3IP2. Forms heterodimers with IL17RE; the heterodimer binds IL17C. (Microbial infection) Interacts with SARS coronavirus-2/SARS-CoV-2 virus protein ORF8. Glycosylated. As to expression, widely expressed.

It is found in the cell membrane. It localises to the secreted. Its function is as follows. Receptor for IL17A and IL17F, major effector cytokines of innate and adaptive immune system involved in antimicrobial host defense and maintenance of tissue integrity. Receptor for IL17A. Receptor for IL17F. Binds to IL17A with higher affinity than to IL17F. Binds IL17A and IL17F homodimers as part of a heterodimeric complex with IL17RC. Also binds heterodimers formed by IL17A and IL17F as part of a heterodimeric complex with IL17RC. Cytokine binding triggers homotypic interaction of IL17RA and IL17RC chains with TRAF3IP2 adapter, leading to TRAF6-mediated activation of NF-kappa-B and MAPkinase pathways, ultimately resulting in transcriptional activation of cytokines, chemokines, antimicrobial peptides and matrix metalloproteinases, with potential strong immune inflammation. Involved in antimicrobial host defense primarily promoting neutrophil activation and recruitment at infection sites to destroy extracellular bacteria and fungi. In secondary lymphoid organs, contributes to germinal center formation by regulating the chemotactic response of B cells to CXCL12 and CXCL13, enhancing retention of B cells within the germinal centers, B cell somatic hypermutation rate and selection toward plasma cells. Plays a role in the maintenance of the integrity of epithelial barriers during homeostasis and pathogen infection. Stimulates the production of antimicrobial beta-defensins DEFB1, DEFB103A, and DEFB104A by mucosal epithelial cells, limiting the entry of microbes through the epithelial barriers. Involved in antiviral host defense through various mechanisms. Enhances immunity against West Nile virus by promoting T cell cytotoxicity. Contributes to Influenza virus clearance by driving the differentiation of B-1a B cells, providing for production of virus-specific IgM antibodies at first line of host defense. Receptor for IL17C as part of a heterodimeric complex with IL17RE. (Microbial infection) Receptor for SARS coronavirus-2/SARS-CoV-2 virus protein ORF8, leading to IL17 pathway activation and an increased secretion of pro-inflammatory factors through activating NF-kappa-B signaling pathway. The chain is Interleukin-17 receptor A from Homo sapiens (Human).